The primary structure comprises 546 residues: Probable Dol-P-Man:Man(7)GlcNAc(2)-PP-Dol alpha-1,6-mannosyltransferase (546 aa).

The next 9 helical transmembrane spans lie at 5-25, 67-87, 113-133, 166-186, 200-220, 258-278, 283-303, 305-325, and 340-360; these read ESIC…YYSY, FIPS…VNPL, FGTL…HLVY, ILVF…MCLI, LLLV…LIDS, LPWL…FVYI, LLIY…HKEW, FIIY…SLCF, and LMFF…LYVF.

This sequence belongs to the glycosyltransferase 22 family.

Its subcellular location is the endoplasmic reticulum membrane. It catalyses the reaction an alpha-D-Man-(1-&gt;2)-alpha-D-Man-(1-&gt;2)-alpha-D-Man-(1-&gt;3)-[alpha-D-Man-(1-&gt;2)-alpha-D-Man-(1-&gt;3)-alpha-D-Man-(1-&gt;6)]-beta-D-Man-(1-&gt;4)-beta-D-GlcNAc-(1-&gt;4)-alpha-D-GlcNAc-diphospho-di-trans,poly-cis-dolichol + a di-trans,poly-cis-dolichyl beta-D-mannosyl phosphate = an alpha-D-Man-(1-&gt;2)-alpha-D-Man-(1-&gt;2)-alpha-D-Man-(1-&gt;3)-[alpha-D-Man-(1-&gt;2)-alpha-D-Man-(1-&gt;3)-[alpha-D-Man-(1-&gt;6)]-alpha-D-Man-(1-&gt;6)]-beta-D-Man-(1-&gt;4)-beta-D-GlcNAc-(1-&gt;4)-alpha-D-GlcNAc-diphospho-di-trans,poly-cis-dolichol + a di-trans,poly-cis-dolichyl phosphate + H(+). The protein operates within protein modification; protein glycosylation. Functionally, mannosyltransferase that operates in the biosynthetic pathway of dolichol-linked oligosaccharides, the glycan precursors employed in protein asparagine (N)-glycosylation. The assembly of dolichol-linked oligosaccharides begins on the cytosolic side of the endoplasmic reticulum membrane and finishes in its lumen. The sequential addition of sugars to dolichol pyrophosphate produces dolichol-linked oligosaccharides containing fourteen sugars, including two GlcNAcs, nine mannoses and three glucoses. Once assembled, the oligosaccharide is transferred from the lipid to nascent proteins by oligosaccharyltransferases. In the lumen of the endoplasmic reticulum, adds the eighth mannose residue in an alpha-1,6 linkage onto Man(7)GlcNAc(2)-PP-dolichol to produce Man(8)GlcNAc(2)-PP-dolichol. The protein is Probable Dol-P-Man:Man(7)GlcNAc(2)-PP-Dol alpha-1,6-mannosyltransferase (alg12) of Schizosaccharomyces pombe (strain 972 / ATCC 24843) (Fission yeast).